The primary structure comprises 621 residues: Very-long-chain aldehyde decarbonylase GL1-5 (621 aa).

The next 5 helical transmembrane spans lie at 99 to 119 (IILSGILLYLGALYVPGGQHL), 126 to 146 (GAGLIALLHAGPVEFLYYWFH), 186 to 206 (LLFSIPLIACALTGTASIIAF), 224 to 244 (FELVPSWLFTWFPPLKYLMYT), and 332 to 352 (MWPLSWLSMVLTWTYGSSFTV). The 135-residue stretch at 138-272 (VEFLYYWFHR…MPFYDYIYNT (135 aa)) folds into the Fatty acid hydroxylase domain.

Belongs to the sterol desaturase family. In terms of assembly, homodimer. Expressed in panicles, developing spikelets, stamens and hulls and, at low levels, in roots, developing seeds, flag leaves and seedling shoots. Strongly expressed in the epidermal cells of anthers.

Its subcellular location is the endoplasmic reticulum membrane. It catalyses the reaction a long-chain fatty aldehyde + 2 NADPH + O2 + H(+) = a long-chain alkane + formate + 2 NADP(+) + H2O. Functionally, aldehyde decarbonylase involved in the conversion of aldehydes to alkanes. Core component of a very-long-chain alkane synthesis complex. Required for the biosynthesis of very-long-chain fatty acids (including polyesters) in cuticles, anther tapetum and pollen exine. This chain is Very-long-chain aldehyde decarbonylase GL1-5, found in Oryza sativa subsp. japonica (Rice).